The chain runs to 506 residues: Glutamate--tRNA ligase (506 aa).

The 'HIGH' region signature appears at Pro-21 to Met-31. Positions Lys-265–Arg-269 match the 'KMSKS' region motif. Lys-268 contributes to the ATP binding site.

This sequence belongs to the class-I aminoacyl-tRNA synthetase family. Glutamate--tRNA ligase type 1 subfamily. In terms of assembly, monomer.

It is found in the cytoplasm. It catalyses the reaction tRNA(Glu) + L-glutamate + ATP = L-glutamyl-tRNA(Glu) + AMP + diphosphate. In terms of biological role, catalyzes the attachment of glutamate to tRNA(Glu) in a two-step reaction: glutamate is first activated by ATP to form Glu-AMP and then transferred to the acceptor end of tRNA(Glu). The sequence is that of Glutamate--tRNA ligase from Bifidobacterium longum (strain DJO10A).